Here is a 748-residue protein sequence, read N- to C-terminus: Cysteine--tRNA ligase, cytoplasmic (748 aa).

The tract at residues 1–25 is disordered; the sequence is MAGSSGQQGKGRRVQPQWSPPAGTQ. At alanine 2 the chain carries N-acetylalanine. A Phosphoserine modification is found at serine 19. Cysteine 55 contacts Zn(2+). Glycine 56 provides a ligand contact to L-cysteine. A 'HIGH' region motif is present at residues 57–67; the sequence is PTVYDASHMGH. Threonine 96 serves as a coordination point for L-cysteine. The 'KIIK' region motif lies at 101-104; it reads KIIK. Serine 305 and serine 307 each carry phosphoserine. Residues cysteine 348, histidine 373, and glutamate 377 each contribute to the Zn(2+) site. Histidine 373 is an L-cysteine binding site. The 'KMSKS' region motif lies at 406-410; the sequence is KMSKS. An ATP-binding site is contributed by lysine 409. Composition is skewed to basic and acidic residues over residues 654–679 and 700–717; these read KRQV…EAAK and KFDE…KELS. Disordered stretches follow at residues 654-686 and 700-721; these read KRQV…MKIP and KFDE…KGQA. The residue at position 746 (serine 746) is a Phosphoserine.

Homodimer. Requires Zn(2+) as cofactor.

The protein resides in the cytoplasm. The catalysed reaction is tRNA(Cys) + L-cysteine + ATP = L-cysteinyl-tRNA(Cys) + AMP + diphosphate. In terms of biological role, catalyzes the ATP-dependent ligation of cysteine to tRNA(Cys). In Macaca fascicularis (Crab-eating macaque), this protein is Cysteine--tRNA ligase, cytoplasmic (CARS1).